A 512-amino-acid chain; its full sequence is Glutathione-binding protein GsiB (512 aa).

A signal peptide spans 1–26 (MARAVHRSGLVALGIATALMASCAFA).

Belongs to the bacterial solute-binding protein 5 family. In terms of assembly, the complex is composed of two ATP-binding proteins (GsiA), two transmembrane proteins (GsiC and GsiD) and a solute-binding protein (GsiB).

The protein resides in the periplasm. Its function is as follows. Part of the ABC transporter complex GsiABCD involved in glutathione import. Binds glutathione. This chain is Glutathione-binding protein GsiB, found in Shigella boydii serotype 4 (strain Sb227).